The primary structure comprises 355 residues: UDP-N-acetylglucosamine--N-acetylmuramyl-(pentapeptide) pyrophosphoryl-undecaprenol N-acetylglucosamine transferase (355 aa).

Residues 13 to 15 (TGG), Asn125, Arg162, Ser190, Ile244, and Gln289 each bind UDP-N-acetyl-alpha-D-glucosamine.

The protein belongs to the glycosyltransferase 28 family. MurG subfamily.

The protein localises to the cell inner membrane. The enzyme catalyses di-trans,octa-cis-undecaprenyl diphospho-N-acetyl-alpha-D-muramoyl-L-alanyl-D-glutamyl-meso-2,6-diaminopimeloyl-D-alanyl-D-alanine + UDP-N-acetyl-alpha-D-glucosamine = di-trans,octa-cis-undecaprenyl diphospho-[N-acetyl-alpha-D-glucosaminyl-(1-&gt;4)]-N-acetyl-alpha-D-muramoyl-L-alanyl-D-glutamyl-meso-2,6-diaminopimeloyl-D-alanyl-D-alanine + UDP + H(+). Its pathway is cell wall biogenesis; peptidoglycan biosynthesis. In terms of biological role, cell wall formation. Catalyzes the transfer of a GlcNAc subunit on undecaprenyl-pyrophosphoryl-MurNAc-pentapeptide (lipid intermediate I) to form undecaprenyl-pyrophosphoryl-MurNAc-(pentapeptide)GlcNAc (lipid intermediate II). The polypeptide is UDP-N-acetylglucosamine--N-acetylmuramyl-(pentapeptide) pyrophosphoryl-undecaprenol N-acetylglucosamine transferase (Neisseria meningitidis serogroup C / serotype 2a (strain ATCC 700532 / DSM 15464 / FAM18)).